The sequence spans 106 residues: Protein yippee-like At4g27745 (106 aa).

The region spanning 8–105 is the Yippee domain; the sequence is RLYSCCNCRN…FEKAKIVKED (98 aa). 4 residues coordinate Zn(2+): Cys-12, Cys-15, Cys-68, and Cys-71.

Belongs to the yippee family.

The chain is Protein yippee-like At4g27745 from Arabidopsis thaliana (Mouse-ear cress).